Consider the following 111-residue polypeptide: MHGERPTLGDIVLDLQPEPVSLSCNEQLDSSDSEDDHEQDQLDSSHNRQREQPTQQDLQVNLQSFKIVTHCVFCHCLVRLVVHCTATDIRQVHQLLMGTLNIVCPNCAATA.

Positions M1–S44 are E7 terminal domain. Residues L22–E26 carry the LXCXE motif; interaction with host RB1 and TMEM173/STING motif. Positions C24 to Q55 are disordered. The segment covering D29 to E38 has biased composition (acidic residues). Positions Q39 to E51 are enriched in basic and acidic residues. Residues C71–C107 fold into a zinc finger. Residues I89–M97 carry the Nuclear export signal motif.

Belongs to the papillomaviridae E7 protein family. Homodimer. Homooligomer. Interacts with host RB1; this interaction induces dissociation of RB1-E2F1 complex thereby disrupting RB1 activity. Interacts with host EP300; this interaction represses EP300 transcriptional activity. Interacts with protein E2; this interaction inhibits E7 oncogenic activity. Interacts with host TMEM173/STING; this interaction impairs the ability of TMEM173/STING to sense cytosolic DNA and promote the production of type I interferon (IFN-alpha and IFN-beta). Post-translationally, highly phosphorylated.

The protein localises to the host cytoplasm. The protein resides in the host nucleus. In terms of biological role, plays a role in viral genome replication by driving entry of quiescent cells into the cell cycle. Stimulation of progression from G1 to S phase allows the virus to efficiently use the cellular DNA replicating machinery to achieve viral genome replication. E7 protein has both transforming and trans-activating activities. Induces the disassembly of the E2F1 transcription factor from RB1, with subsequent transcriptional activation of E2F1-regulated S-phase genes. Interferes with host histone deacetylation mediated by HDAC1 and HDAC2, leading to transcription activation. Also plays a role in the inhibition of both antiviral and antiproliferative functions of host interferon alpha. Interaction with host TMEM173/STING impairs the ability of TMEM173/STING to sense cytosolic DNA and promote the production of type I interferon (IFN-alpha and IFN-beta). In Human papillomavirus 7, this protein is Protein E7.